The following is an 84-amino-acid chain: Acetylcholine receptor subunit alpha (84 aa).

Disulfide bonds link Cys7/Cys21 and Cys71/Cys72. Residue Asn20 is glycosylated (N-linked (GlcNAc...) asparagine).

The protein belongs to the ligand-gated ion channel (TC 1.A.9) family. Acetylcholine receptor (TC 1.A.9.1) subfamily. Alpha-1/CHRNA1 sub-subfamily. One of the alpha chains that assemble within the acetylcholine receptor, a pentamer of two alpha chains, a beta, a delta, and a gamma (in immature muscle) or epsilon (in mature muscle) chains. The muscle heteropentamer composed of alpha-1, beta-1, delta, epsilon subunits interacts with the alpha-conotoxin ImII.

It localises to the postsynaptic cell membrane. The protein resides in the cell membrane. The enzyme catalyses K(+)(in) = K(+)(out). The catalysed reaction is Na(+)(in) = Na(+)(out). Functionally, upon acetylcholine binding, the AChR responds by an extensive change in conformation that affects all subunits and leads to opening of an ion-conducting channel across the plasma membrane. The polypeptide is Acetylcholine receptor subunit alpha (CHRNA1) (Crocidura russula (Greater white-toothed shrew)).